A 396-amino-acid chain; its full sequence is Elongation factor Tu (396 aa).

The region spanning 10 to 205 is the tr-type G domain; that stretch reads KPHVNIGTIG…AVDESIPAPV (196 aa). The tract at residues 19–26 is G1; it reads GHVDHGKT. GTP is bound at residue 19–26; it reads GHVDHGKT. Position 26 (threonine 26) interacts with Mg(2+). The G2 stretch occupies residues 62–66; that stretch reads GITIN. The tract at residues 83 to 86 is G3; sequence DAPG. GTP contacts are provided by residues 83 to 87 and 138 to 141; these read DAPGH and NKSD. Residues 138 to 141 are G4; the sequence is NKSD. The interval 175–177 is G5; sequence SAL.

This sequence belongs to the TRAFAC class translation factor GTPase superfamily. Classic translation factor GTPase family. EF-Tu/EF-1A subfamily. As to quaternary structure, monomer.

The protein localises to the cytoplasm. The enzyme catalyses GTP + H2O = GDP + phosphate + H(+). Its function is as follows. GTP hydrolase that promotes the GTP-dependent binding of aminoacyl-tRNA to the A-site of ribosomes during protein biosynthesis. This chain is Elongation factor Tu, found in Mycobacterium leprae (strain Br4923).